A 1184-amino-acid chain; its full sequence is MMQLLQLLLGLLGPGGYLFLLGDCQEVTTLTVKYQVSEEVPSGTVIGKLSQELGREERRRQAGAAFQVLQLPQALPIQVDSEEGLLSTGRRLDREQLCRQWDPCLVSFDVLATGDLALIHVEIQVLDINDHQPRFPKGEQELEISESASLRTRIPLDRALDPDTGPNTLHTYTLSPSEHFALDVIVGPDETKHAELIVVKELDREIHSFFDLVLTAYDNGNPPKSGTSLVKVNVLDSNDNSPAFAESSLALEIQEDAAPGTLLIKLTATDPDQGPNGEVEFFLSKHMPPEVLDTFSIDAKTGQVILRRPLDYEKNPAYEVDVQARDLGPNPIPAHCKVLIKVLDVNDNIPSIHVTWASQPSLVSEALPKDSFIALVMADDLDSGHNGLVHCWLSQELGHFRLKRTNGNTYMLLTNATLDREQWPKYTLTLLAQDQGLQPLSAKKQLSIQISDINDNAPVFEKSRYEVSTRENNLPSLHLITIKAHDADLGINGKVSYRIQDSPVAHLVAIDSNTGEVTAQRSLNYEEMAGFEFQVIAEDSGQPMLASSVSVWVSLLDANDNAPEVVQPVLSDGKASLSVLVNASTGHLLVPIETPNGLGPAGTDTPPLATHSSRPFLLTTIVARDADSGANGEPLYSIRSGNEAHLFILNPHTGQLFVNVTNASSLIGSEWELEIVVEDQGSPPLQTRALLRVMFVTSVDHLRDSARKPGALSMSMLTVICLAVLLGIFGLILALFMSICRTEKKDNRAYNCREAESTYRQQPKRPQKHIQKADIHLVPVLRGQAGEPCEVGQSHKDVDKEAMMEAGWDPCLQAPFHLTPTLYRTLRNQGNQGAPAESREVLQDTVNLLFNHPRQRNASRENLNLPEPQPATGQPRSRPLKVAGSPTGRLAGDQGSEEAPQRPPASSATLRRQRHLNGKVSPEKESGPRQILRSLVRLSVAAFAERNPVEELTVDSPPVQQISQLLSLLHQGQFQPKPNHRGNKYLAKPGGSRSAIPDTDGPSARAGGQTDPEQEEGPLDPEEDLSVKQLLEEELSSLLDPSTGLALDRLSAPDPAWMARLSLPLTTNYRDNVISPDAAATEEPRTFQTFGKAEAPELSPTGTRLASTFVSEMSSLLEMLLEQRSSMPVEAASEALRRLSVCGRTLSLDLATSAASGMKVQGDPGGKTGTEGKSRGSSSSSRCL.

Positions methionine 1–cysteine 24 are cleaved as a signal peptide. The Extracellular portion of the chain corresponds to glutamine 25 to threonine 718. 5 Cadherin domains span residues threonine 28–phenylalanine 135, proline 136–phenylalanine 244, alanine 245–isoleucine 352, threonine 355–phenylalanine 460, and glutamate 461–valine 565. Asparagine 415 is a glycosylation site (N-linked (GlcNAc...) asparagine). N-linked (GlcNAc...) asparagine glycosylation is found at asparagine 582, asparagine 659, and asparagine 662. One can recognise a Cadherin 6 domain in the interval proline 600–alanine 711. Residues valine 719–isoleucine 739 traverse the membrane as a helical segment. Residues cysteine 740–leucine 1184 are Cytoplasmic-facing. Disordered regions lie at residues arginine 854–proline 928 and glutamine 973–glutamate 1023. Residue serine 859 is modified to Phosphoserine. Acidic residues predominate over residues proline 1012–glutamate 1023. Serine 1062 is subject to Phosphoserine. The segment at serine 1153–leucine 1184 is disordered. Over residues arginine 1175–leucine 1184 the composition is skewed to low complexity.

Cleaved by ADAM10 close to the transmembrane domain to release the Protocadherin-12, secreted form in the serum. Cleavage results in reduced cellular adhesion in a cell migration assay. In terms of tissue distribution, expressed in highly vascularized tissues including the heart and placenta, but most tissues contain a low level of expression. Prominent expression in the spleen. Present in villous and extravillous trophoblast (at protein level).

It localises to the cell membrane. It is found in the cell junction. The protein resides in the secreted. Cellular adhesion molecule that may play an important role in cell-cell interactions at interendothelial junctions. Acts as a regulator of cell migration, probably via increasing cell-cell adhesion. Promotes homotypic calcium-dependent aggregation and adhesion and clusters at intercellular junctions. Unable to bind to catenins, weakly associates with the cytoskeleton. The sequence is that of Protocadherin-12 from Homo sapiens (Human).